Reading from the N-terminus, the 431-residue chain is Hydroxylamine reductase (431 aa).

The [4Fe-4S] cluster site is built by C5, C8, C17, and C23. Residues H131, E155, C199, C286, C314, C339, E373, and K375 each contribute to the hybrid [4Fe-2O-2S] cluster site. Cysteine persulfide is present on C286.

The protein belongs to the HCP family. Requires [4Fe-4S] cluster as cofactor. The cofactor is hybrid [4Fe-2O-2S] cluster.

The protein resides in the cytoplasm. It catalyses the reaction A + NH4(+) + H2O = hydroxylamine + AH2 + H(+). Catalyzes the reduction of hydroxylamine to form NH(3) and H(2)O. This chain is Hydroxylamine reductase, found in Thermotoga maritima (strain ATCC 43589 / DSM 3109 / JCM 10099 / NBRC 100826 / MSB8).